Reading from the N-terminus, the 390-residue chain is Phosphopentomutase (390 aa).

Mn(2+) is bound by residues aspartate 14, aspartate 286, histidine 291, aspartate 327, histidine 328, and histidine 339.

This sequence belongs to the phosphopentomutase family. Mn(2+) is required as a cofactor.

It is found in the cytoplasm. It catalyses the reaction 2-deoxy-alpha-D-ribose 1-phosphate = 2-deoxy-D-ribose 5-phosphate. The enzyme catalyses alpha-D-ribose 1-phosphate = D-ribose 5-phosphate. Its pathway is carbohydrate degradation; 2-deoxy-D-ribose 1-phosphate degradation; D-glyceraldehyde 3-phosphate and acetaldehyde from 2-deoxy-alpha-D-ribose 1-phosphate: step 1/2. Isomerase that catalyzes the conversion of deoxy-ribose 1-phosphate (dRib-1-P) and ribose 1-phosphate (Rib-1-P) to deoxy-ribose 5-phosphate (dRib-5-P) and ribose 5-phosphate (Rib-5-P), respectively. This is Phosphopentomutase from Exiguobacterium sibiricum (strain DSM 17290 / CCUG 55495 / CIP 109462 / JCM 13490 / 255-15).